A 290-amino-acid polypeptide reads, in one-letter code: Protease HtpX (290 aa).

2 helical membrane passes run 4–24 (IMLF…TLKL) and 36–56 (GSLL…SLFI). H142 lines the Zn(2+) pocket. E143 is a catalytic residue. H146 contacts Zn(2+). A run of 2 helical transmembrane segments spans residues 150 to 170 (GDMV…MFFA) and 193 to 213 (FIAT…IVMW). A Zn(2+)-binding site is contributed by E219.

This sequence belongs to the peptidase M48B family. It depends on Zn(2+) as a cofactor.

The protein localises to the cell inner membrane. The protein is Protease HtpX of Ectopseudomonas mendocina (strain ymp) (Pseudomonas mendocina).